We begin with the raw amino-acid sequence, 478 residues long: Ribulose bisphosphate carboxylase large chain (478 aa).

Residues 1-2 (MS) constitute a propeptide that is removed on maturation. Pro-3 carries the post-translational modification N-acetylproline. At Lys-14 the chain carries N6,N6,N6-trimethyllysine. Asn-123 and Thr-173 together coordinate substrate. The Proton acceptor role is filled by Lys-175. Residue Lys-177 participates in substrate binding. Mg(2+)-binding residues include Lys-201, Asp-203, and Glu-204. The residue at position 201 (Lys-201) is an N6-carboxylysine. Catalysis depends on His-294, which acts as the Proton acceptor. Substrate-binding residues include Arg-295, His-327, and Ser-379.

The protein belongs to the RuBisCO large chain family. Type I subfamily. In terms of assembly, heterohexadecamer of 8 large chains and 8 small chains; disulfide-linked. The disulfide link is formed within the large subunit homodimers. Mg(2+) is required as a cofactor. In terms of processing, the disulfide bond which can form in the large chain dimeric partners within the hexadecamer appears to be associated with oxidative stress and protein turnover.

The protein localises to the plastid. It localises to the chloroplast. It carries out the reaction 2 (2R)-3-phosphoglycerate + 2 H(+) = D-ribulose 1,5-bisphosphate + CO2 + H2O. The enzyme catalyses D-ribulose 1,5-bisphosphate + O2 = 2-phosphoglycolate + (2R)-3-phosphoglycerate + 2 H(+). In terms of biological role, ruBisCO catalyzes two reactions: the carboxylation of D-ribulose 1,5-bisphosphate, the primary event in carbon dioxide fixation, as well as the oxidative fragmentation of the pentose substrate in the photorespiration process. Both reactions occur simultaneously and in competition at the same active site. In Drimys granadensis, this protein is Ribulose bisphosphate carboxylase large chain.